Consider the following 329-residue polypeptide: Cardiolipin synthase (CMP-forming) (329 aa).

A mitochondrion-targeting transit peptide spans 1 to 34 (MPPSVATHASLLLKAAAAAAHLHPKPFFSPRAAP). Positions 27 to 55 (FFSPRAAPPRIPSAPAPPAAGGSRYRPTT) are disordered. A compositionally biased stretch (pro residues) spans 32 to 44 (AAPPRIPSAPAPP). The next 5 helical transmembrane spans lie at 134–154 (LLTLPTVLTIGRVAAVPLLIS), 156–176 (FYMEGPWAATATTGIFLAAAV), 194–214 (FGAFLDPVADKLMVAATLVLL), 228–248 (PWLLTVPAIAIIGREITMSAV), and 298–318 (VTSGIALLYVSAGLAIWSLVV). Residues 319–329 (YMRKIWRILLK) are Mitochondrial intermembrane-facing.

It belongs to the CDP-alcohol phosphatidyltransferase class-I family. It depends on Mn(2+) as a cofactor.

It is found in the mitochondrion inner membrane. The catalysed reaction is a CDP-1,2-diacyl-sn-glycerol + a 1,2-diacyl-sn-glycero-3-phospho-(1'-sn-glycerol) = a cardiolipin + CMP + H(+). Catalyzes the synthesis of cardiolipin (CL) (diphosphatidylglycerol) by specifically transferring a phosphatidyl group from CDP-diacylglycerol to phosphatidylglycerol (PG). CL is a key phospholipid in mitochondrial membranes and plays important roles in maintaining the functional integrity and dynamics of mitochondria under both optimal and stress conditions. This chain is Cardiolipin synthase (CMP-forming), found in Oryza sativa subsp. japonica (Rice).